A 72-amino-acid polypeptide reads, in one-letter code: MNLGLAIFLIIIALLVGATAGFYGARAYMKKYFKENPPISEEMIVAMMSQMGQKPSNKKVHQVMNMMKHQQK.

The chain crosses the membrane as a helical span at residues 3-23 (LGLAIFLIIIALLVGATAGFY).

This sequence belongs to the UPF0154 family.

It is found in the cell membrane. In Lactobacillus acidophilus (strain ATCC 700396 / NCK56 / N2 / NCFM), this protein is UPF0154 protein LBA1278.